A 395-amino-acid chain; its full sequence is Succinyl-diaminopimelate desuccinylase (395 aa).

A Zn(2+)-binding site is contributed by His74. Asp76 is a catalytic residue. Asp107 is a binding site for Zn(2+). Glu141 functions as the Proton acceptor in the catalytic mechanism. Zn(2+) contacts are provided by Glu142, Glu170, and His368.

It belongs to the peptidase M20A family. DapE subfamily. As to quaternary structure, homodimer. Requires Zn(2+) as cofactor. Co(2+) serves as cofactor.

The catalysed reaction is N-succinyl-(2S,6S)-2,6-diaminopimelate + H2O = (2S,6S)-2,6-diaminopimelate + succinate. Its pathway is amino-acid biosynthesis; L-lysine biosynthesis via DAP pathway; LL-2,6-diaminopimelate from (S)-tetrahydrodipicolinate (succinylase route): step 3/3. Its function is as follows. Catalyzes the hydrolysis of N-succinyl-L,L-diaminopimelic acid (SDAP), forming succinate and LL-2,6-diaminopimelate (DAP), an intermediate involved in the bacterial biosynthesis of lysine and meso-diaminopimelic acid, an essential component of bacterial cell walls. This Brucella melitensis biotype 1 (strain ATCC 23456 / CCUG 17765 / NCTC 10094 / 16M) protein is Succinyl-diaminopimelate desuccinylase.